The sequence spans 253 residues: tRNA pseudouridine synthase A (253 aa).

The active-site Nucleophile is Asp53. Residue Tyr112 coordinates substrate.

It belongs to the tRNA pseudouridine synthase TruA family. Homodimer.

The enzyme catalyses uridine(38/39/40) in tRNA = pseudouridine(38/39/40) in tRNA. Formation of pseudouridine at positions 38, 39 and 40 in the anticodon stem and loop of transfer RNAs. This is tRNA pseudouridine synthase A from Lactococcus lactis subsp. cremoris (strain SK11).